A 257-amino-acid chain; its full sequence is UPF0246 protein BF4021 (257 aa).

Belongs to the UPF0246 family.

The polypeptide is UPF0246 protein BF4021 (Bacteroides fragilis (strain YCH46)).